The primary structure comprises 379 residues: 3-dehydroquinate synthase (379 aa).

NAD(+) is bound by residues 67–72 (PGEKNK), 101–105 (GIILD), 125–126 (TT), Lys138, and Lys147. Glu180, His242, and His258 together coordinate Zn(2+).

It belongs to the sugar phosphate cyclases superfamily. Dehydroquinate synthase family. Requires NAD(+) as cofactor. Co(2+) serves as cofactor. It depends on Zn(2+) as a cofactor.

It is found in the cytoplasm. It catalyses the reaction 7-phospho-2-dehydro-3-deoxy-D-arabino-heptonate = 3-dehydroquinate + phosphate. The protein operates within metabolic intermediate biosynthesis; chorismate biosynthesis; chorismate from D-erythrose 4-phosphate and phosphoenolpyruvate: step 2/7. Catalyzes the conversion of 3-deoxy-D-arabino-heptulosonate 7-phosphate (DAHP) to dehydroquinate (DHQ). This Chlamydia caviae (strain ATCC VR-813 / DSM 19441 / 03DC25 / GPIC) (Chlamydophila caviae) protein is 3-dehydroquinate synthase.